The primary structure comprises 109 residues: Nucleoid-associated protein Spea_1509 (109 aa).

A disordered region spans residues 87 to 109 (NQKEKMAEVTGGMQLPPGMKMPF).

It belongs to the YbaB/EbfC family. In terms of assembly, homodimer.

The protein localises to the cytoplasm. The protein resides in the nucleoid. Functionally, binds to DNA and alters its conformation. May be involved in regulation of gene expression, nucleoid organization and DNA protection. In Shewanella pealeana (strain ATCC 700345 / ANG-SQ1), this protein is Nucleoid-associated protein Spea_1509.